The sequence spans 285 residues: HTH-type transcriptional regulator MurR (285 aa).

The region spanning 1–77 (MLYLTKISNA…MALIGEYSAS (77 aa)) is the HTH rpiR-type domain. Residues 37–56 (SRQMAKQLGISQSSIVKFAQ) constitute a DNA-binding region (H-T-H motif). The region spanning 128–268 (IIEVISKAPF…FVGLVQLNDV (141 aa)) is the SIS domain.

As to quaternary structure, homotetramer.

The protein operates within amino-sugar metabolism; N-acetylmuramate degradation [regulation]. In terms of biological role, represses the expression of the murPQ operon involved in the uptake and degradation of N-acetylmuramic acid (MurNAc). Binds to two adjacent inverted repeats within the operator region. MurNAc 6-phosphate, the substrate of MurQ, is the specific inducer that weakens binding of MurR to the operator. This chain is HTH-type transcriptional regulator MurR, found in Escherichia coli O139:H28 (strain E24377A / ETEC).